A 218-amino-acid polypeptide reads, in one-letter code: Small ribosomal subunit protein uS3c (218 aa).

In terms of domain architecture, KH type-2 spans 47-118; the sequence is VQKHMRVSSG…RLNIAITRVA (72 aa).

The protein belongs to the universal ribosomal protein uS3 family. As to quaternary structure, part of the 30S ribosomal subunit.

It localises to the plastid. The protein resides in the chloroplast. This Illicium oligandrum (Star anise) protein is Small ribosomal subunit protein uS3c (rps3).